Here is a 305-residue protein sequence, read N- to C-terminus: Cytoplasmic envelopment protein 1 (305 aa).

It belongs to the herpesviridae cytoplasmic envelopment protein 1 family.

Its subcellular location is the virion. The protein localises to the virion tegument. The protein resides in the host cytoplasm. It is found in the host Golgi apparatus. In terms of biological role, plays a critical role in cytoplasmic virus egress. Participates in the final step of tegumentation and envelope acquisition within the host cytoplasm. The protein is Cytoplasmic envelopment protein 1 (MDV019) of Gallus gallus (Chicken).